The following is a 227-amino-acid chain: Octanoyltransferase (227 aa).

In terms of domain architecture, BPL/LPL catalytic spans 47–223; sequence EDTADEIWLL…HLLRLLPPGV (177 aa). Substrate contacts are provided by residues 87–94, 154–156, and 167–169; these read RGGQITYH, ALG, and GLA. Residue Cys185 is the Acyl-thioester intermediate of the active site.

Belongs to the LipB family.

The protein localises to the cytoplasm. It catalyses the reaction octanoyl-[ACP] + L-lysyl-[protein] = N(6)-octanoyl-L-lysyl-[protein] + holo-[ACP] + H(+). The protein operates within protein modification; protein lipoylation via endogenous pathway; protein N(6)-(lipoyl)lysine from octanoyl-[acyl-carrier-protein]: step 1/2. Its function is as follows. Catalyzes the transfer of endogenously produced octanoic acid from octanoyl-acyl-carrier-protein onto the lipoyl domains of lipoate-dependent enzymes. Lipoyl-ACP can also act as a substrate although octanoyl-ACP is likely to be the physiological substrate. In Azoarcus sp. (strain BH72), this protein is Octanoyltransferase.